The following is a 375-amino-acid chain: Fluoride export protein 1 (375 aa).

The Cytoplasmic segment spans residues 1–11 (MIFNPVISNHK). The helical transmembrane segment at 12–32 (LSHYIHVFCTFTTFCILGTET) threads the bilayer. The Extracellular portion of the chain corresponds to 33–34 (RQ). The helical transmembrane segment at 35–55 (AITALSTYTPAFVTAPTVLWS) threads the bilayer. The Cytoplasmic portion of the chain corresponds to 56–79 (NCSSCMLMGIMQSLNAYTWMKDHQ). A helical membrane pass occupies residues 80–100 (VLFLGVTTGYCGALSSFSSML). Topologically, residues 101–127 (LEMFEHSTNLTNGNIANHTKLPNRAYG) are extracellular. 2 N-linked (GlcNAc...) asparagine glycosylation sites follow: Asn109 and Asn117. Residues 128–148 (IMEFLSVLLVHLMVSMGSLIF) form a helical membrane-spanning segment. The Cytoplasmic portion of the chain corresponds to 149-213 (GRQLGKEVIV…FKKFFDIVDK (65 aa)). Residues 214 to 234 (LAYALAFPLIILFVVLCAYYE) form a helical membrane-spanning segment. Asn235 carries N-linked (GlcNAc...) asparagine glycosylation. Topologically, residues 235–241 (NYSRGKW) are extracellular. Residues 242–262 (TLPCLFGIFAGFLRYWLAEMF) form a helical membrane-spanning segment. Residues 263-268 (NKTNKK) lie on the Cytoplasmic side of the membrane. A helical transmembrane segment spans residues 269–289 (FPLGTFLANVFATLLIGIFTM). The Extracellular segment spans residues 290 to 310 (VQRGKKHFSTDVPIVNSLNSC). Residues 311-331 (HIVSALISGFCGTLSTISTFI) traverse the membrane as a helical segment. Residues 332 to 338 (NEGYKLS) lie on the Cytoplasmic side of the membrane. Residues 339 to 359 (FINMLIYYTVSIAISYCLLVI) traverse the membrane as a helical segment. Topologically, residues 360-375 (TLGSYAWTRGLTNPIC) are extracellular.

This sequence belongs to the fluoride channel Fluc/FEX (TC 1.A.43) family.

It is found in the cell membrane. The enzyme catalyses fluoride(in) = fluoride(out). Fluoride channel required for the rapid expulsion of cytoplasmic fluoride. In Saccharomyces cerevisiae (strain ATCC 204508 / S288c) (Baker's yeast), this protein is Fluoride export protein 1.